The following is a 539-amino-acid chain: Chaperonin GroEL (539 aa).

Residues 29–32 (TLGP), 86–90 (DGTTT), Gly413, 479–481 (DAL), and Asp495 contribute to the ATP site.

Belongs to the chaperonin (HSP60) family. In terms of assembly, forms a cylinder of 14 subunits composed of two heptameric rings stacked back-to-back. Interacts with the co-chaperonin GroES.

The protein resides in the cytoplasm. It catalyses the reaction ATP + H2O + a folded polypeptide = ADP + phosphate + an unfolded polypeptide.. Its function is as follows. Together with its co-chaperonin GroES, plays an essential role in assisting protein folding. The GroEL-GroES system forms a nano-cage that allows encapsulation of the non-native substrate proteins and provides a physical environment optimized to promote and accelerate protein folding. The chain is Chaperonin GroEL from Thermosipho africanus (strain TCF52B).